We begin with the raw amino-acid sequence, 189 residues long: ADP-ribosylation factor H (189 aa).

Residues 34 to 40 (DGAGKST), 75 to 79 (DVGGQ), and 134 to 137 (NKQD) each bind GTP.

Belongs to the small GTPase superfamily. Arf family.

The protein resides in the golgi apparatus. GTP-binding protein that may be involved in protein trafficking. May modulate vesicle budding and uncoating within the Golgi apparatus. The chain is ADP-ribosylation factor H (arrH) from Dictyostelium discoideum (Social amoeba).